Consider the following 213-residue polypeptide: Probable nicotinate-nucleotide adenylyltransferase (213 aa).

It belongs to the NadD family.

It carries out the reaction nicotinate beta-D-ribonucleotide + ATP + H(+) = deamido-NAD(+) + diphosphate. Its pathway is cofactor biosynthesis; NAD(+) biosynthesis; deamido-NAD(+) from nicotinate D-ribonucleotide: step 1/1. Functionally, catalyzes the reversible adenylation of nicotinate mononucleotide (NaMN) to nicotinic acid adenine dinucleotide (NaAD). The polypeptide is Probable nicotinate-nucleotide adenylyltransferase (Shigella boydii serotype 18 (strain CDC 3083-94 / BS512)).